A 964-amino-acid polypeptide reads, in one-letter code: Translation initiation factor IF-2 (964 aa).

Residues 1–10 (MSDKTNDDKT) show a composition bias toward basic and acidic residues. The interval 1–379 (MSDKTNDDKT…SQMQETREKI (379 aa)) is disordered. The span at 27–37 (EQSTVRQNFSH) shows a compositional bias: polar residues. Positions 77–102 (APAASTPAPAQAAQPAQAAPVVRAPA) are enriched in low complexity. Residues 103-113 (PATPAPKPAAP) show a composition bias toward pro residues. The segment covering 114 to 140 (AAPVTKPHVAQQRPAQQRPGGQQAQRP) has biased composition (low complexity). Basic and acidic residues-rich tracts occupy residues 156-227 (SEMD…EAAK) and 234-243 (ARTERRDDAR). Over residues 250 to 278 (RPQQAGRPQGNRPPQGGRPQQGGPRPAAP) the composition is skewed to low complexity. A compositionally biased stretch (basic and acidic residues) spans 323-338 (PEVRAPKVVKTEDDRR). One can recognise a tr-type G domain in the interval 462–629 (SRPPVVTIMG…AILLQAEILD (168 aa)). Positions 471–478 (GHVDHGKT) are G1. 471-478 (GHVDHGKT) provides a ligand contact to GTP. The G2 stretch occupies residues 496-500 (GITQH). Positions 517 to 520 (DTPG) are G3. GTP contacts are provided by residues 517–521 (DTPGH) and 571–574 (NKID). The segment at 571–574 (NKID) is G4. Residues 607-609 (SAK) form a G5 region.

Belongs to the TRAFAC class translation factor GTPase superfamily. Classic translation factor GTPase family. IF-2 subfamily.

It localises to the cytoplasm. One of the essential components for the initiation of protein synthesis. Protects formylmethionyl-tRNA from spontaneous hydrolysis and promotes its binding to the 30S ribosomal subunits. Also involved in the hydrolysis of GTP during the formation of the 70S ribosomal complex. This is Translation initiation factor IF-2 from Brucella anthropi (strain ATCC 49188 / DSM 6882 / CCUG 24695 / JCM 21032 / LMG 3331 / NBRC 15819 / NCTC 12168 / Alc 37) (Ochrobactrum anthropi).